The chain runs to 403 residues: Na(+)-translocating NADH-quinone reductase subunit B (403 aa).

The next 9 helical transmembrane spans lie at 56–76, 121–141, 163–183, 220–240, 265–285, 287–307, 312–332, 348–368, and 371–391; these read MMIT…WNTG, AYFL…EVLF, ILPP…GVVI, WTAV…SGGI, TSTL…IASW, IVSG…LIGS, MFAM…GMFF, WIFG…NPAF, and GMML…HFVV. An FMN phosphoryl threonine modification is found at Thr-230.

This sequence belongs to the NqrB/RnfD family. Composed of six subunits; NqrA, NqrB, NqrC, NqrD, NqrE and NqrF. FMN is required as a cofactor.

It is found in the cell inner membrane. It carries out the reaction a ubiquinone + n Na(+)(in) + NADH + H(+) = a ubiquinol + n Na(+)(out) + NAD(+). Its function is as follows. NQR complex catalyzes the reduction of ubiquinone-1 to ubiquinol by two successive reactions, coupled with the transport of Na(+) ions from the cytoplasm to the periplasm. NqrA to NqrE are probably involved in the second step, the conversion of ubisemiquinone to ubiquinol. This is Na(+)-translocating NADH-quinone reductase subunit B from Ectopseudomonas mendocina (strain ymp) (Pseudomonas mendocina).